A 482-amino-acid polypeptide reads, in one-letter code: MAQYYTTMNLKSRFAPSPTGYLHLGNARTALFAWLAARGAGGTFILRLEDTDQQRSPEIYERALLEDLRWFGIDWDEGPDRGGDHGPYRQMERLAVYGRYYAHLQSSGQAYACYCSADDLAAERAVQRSAGKAPRYGGRCRHLDAAARAEREAAGLLPTLRFRVPDQGTLTVPDLVWGERHYALADLGDFVIRRSDGSPAFFFANAVDDALMEVNLVLRGEDHLTNTPRQILILQALGLPVPAYGHLPLLLGADGQPLSKRYGAASLRDLRKDGYLAAALRNYLARLGHHYSATGFLDSRALAQGFALNQISRAPSHFDMVQLQHWQHEAVQSLDDAAVWNWLAPLLRGKVPMGLEMPFVAAVRANILLPGDALDWAERCFGAPALAADAVEAITGVSPEFWSVAQATLQASGGDYRRWTKALQQASGRRGKALFMPLRAALTGLTHGPELAALLPLIGEERALARLHAAARRPSTPIETTL.

Positions 16–26 match the 'HIGH' region motif; that stretch reads PSPTGYLHLGN. Residues C113, C115, C140, and H142 each contribute to the Zn(2+) site. Positions 257 to 261 match the 'KMSKS' region motif; that stretch reads PLSKR. Position 260 (K260) interacts with ATP.

Belongs to the class-I aminoacyl-tRNA synthetase family. Glutamate--tRNA ligase type 1 subfamily. As to quaternary structure, monomer. The cofactor is Zn(2+).

The protein resides in the cytoplasm. It catalyses the reaction tRNA(Glu) + L-glutamate + ATP = L-glutamyl-tRNA(Glu) + AMP + diphosphate. Its function is as follows. Catalyzes the attachment of glutamate to tRNA(Glu) in a two-step reaction: glutamate is first activated by ATP to form Glu-AMP and then transferred to the acceptor end of tRNA(Glu). The polypeptide is Glutamate--tRNA ligase 2 (Acidithiobacillus ferrooxidans (strain ATCC 53993 / BNL-5-31) (Leptospirillum ferrooxidans (ATCC 53993))).